The sequence spans 540 residues: 2,3-bisphosphoglycerate-independent phosphoglycerate mutase (540 aa).

Mn(2+) contacts are provided by Asp24 and Ser74. Ser74 (phosphoserine intermediate) is an active-site residue. Substrate-binding positions include His135, 165–166 (RD), Arg197, Arg203, 268–271 (RPDR), and Lys341. Residues Asp408, His412, Asp449, His450, and His467 each contribute to the Mn(2+) site.

This sequence belongs to the BPG-independent phosphoglycerate mutase family. Monomer. Mn(2+) is required as a cofactor.

It carries out the reaction (2R)-2-phosphoglycerate = (2R)-3-phosphoglycerate. It functions in the pathway carbohydrate degradation; glycolysis; pyruvate from D-glyceraldehyde 3-phosphate: step 3/5. In terms of biological role, catalyzes the interconversion of 2-phosphoglycerate and 3-phosphoglycerate. This is 2,3-bisphosphoglycerate-independent phosphoglycerate mutase from Prochlorococcus marinus (strain MIT 9303).